A 197-amino-acid polypeptide reads, in one-letter code: Putative peptidyl-prolyl cis-trans isomerase (197 aa).

In terms of domain architecture, PPIase cyclophilin-type spans 14 to 195; sequence NEIKVVMHTN…YDVVIESIDV (182 aa).

Belongs to the cyclophilin-type PPIase family.

It carries out the reaction [protein]-peptidylproline (omega=180) = [protein]-peptidylproline (omega=0). Functionally, PPIases accelerate the folding of proteins. It catalyzes the cis-trans isomerization of proline imidic peptide bonds in oligopeptides. The protein is Putative peptidyl-prolyl cis-trans isomerase of Staphylococcus epidermidis (strain ATCC 35984 / DSM 28319 / BCRC 17069 / CCUG 31568 / BM 3577 / RP62A).